A 193-amino-acid chain; its full sequence is General stress protein 16U (193 aa).

This sequence belongs to the CAPAB/TerDEXZ family.

This Bacillus subtilis (strain 168) protein is General stress protein 16U (yceD).